The primary structure comprises 382 residues: Galactokinase (382 aa).

Position 34–37 (34–37 (EHTD)) interacts with substrate. ATP is bound at residue 124 to 130 (GAGLSSS). Residues Ser130 and Glu162 each contribute to the Mg(2+) site. Residue Asp174 is the Proton acceptor of the active site. Tyr223 is a substrate binding site.

This sequence belongs to the GHMP kinase family. GalK subfamily.

It localises to the cytoplasm. The catalysed reaction is alpha-D-galactose + ATP = alpha-D-galactose 1-phosphate + ADP + H(+). It functions in the pathway carbohydrate metabolism; galactose metabolism. Catalyzes the transfer of the gamma-phosphate of ATP to D-galactose to form alpha-D-galactose-1-phosphate (Gal-1-P). This is Galactokinase from Cronobacter sakazakii (strain ATCC BAA-894) (Enterobacter sakazakii).